The chain runs to 766 residues: MAPGPFSSGLLSPPPAALPFLLLLWAGASRGQPCPGRCICQNVAPTLTMLCAKTGLLFVPPAIDRRVVELRLTDNFIAAVRRRDFANMTSLVHLTLSRNTIGQVAAGAFADLRALRALHLDSNRLAEVRGDQLRGLGNLRHLILGNNQIRKVESAAFDAFLSTVEDLDLSYNNLEALPWEAVGQMVNLNTLTLDHNLIDHIAEGTFVQLHKLVRLDMTSNRLHKLPPDGLFLRSQGGGPKPPTPLTVSFGGNPLHCNCELLWLRRLTREDDLETCATPEHLTDRYFWSIPEEEFLCEPPLITRQAGGRALVVEGQAVSLRCRAVGDPEPVVHWVAPDGRLLGNSSRTRVRGDGTLDVTITTLRDSGTFTCIASNAAGEATAPVEVCVVPLPLMAPPPAAPPPLTEPGSSDIATPGRPGANDSATERRLVAAELTSSSVLIRWPAQRPVPGIRMYQVQYNSSADDSLVYRMIPSTSQTFLVNDLAAGRAYDLCVLAVYDDGATALPATRVVGCVQFTTAGDPAPCRPLRAHFLGGTMIIAIGGVIVASVLVFIVLLMIRYKVYGDGDSRRIKGTSRSPPRVSHVCSQTNGSSAQQASAPPAPDRYEALREVAVPAAIEAKAMEAEATSTELEVVLGRSLGGSATSLCLLPSEETSGEESRAVTGPRRSRSGALGPPTSAPPTLALVRGGSPARPRPQQRYSFDGDYGALFQSHSYPRRARRTKRHRSTPHLDGAGGGAAGEDGDLGLGSARARLAFTSTEWMLESTV.

Positions 1–31 (MAPGPFSSGLLSPPPAALPFLLLLWAGASRG) are cleaved as a signal peptide. Residues 32–65 (QPCPGRCICQNVAPTLTMLCAKTGLLFVPPAIDR) form the LRRNT domain. Residues 32 to 536 (QPCPGRCICQ…LRAHFLGGTM (505 aa)) lie on the Extracellular side of the membrane. 7 LRR repeats span residues 66-87 (RVVE…DFAN), 90-111 (SLVH…AFAD), 114-135 (ALRA…QLRG), 138-159 (NLRH…AFDA), 163-184 (TVED…AVGQ), 187-208 (NLNT…TFVQ), and 211-232 (KLVR…GLFL). N-linked (GlcNAc...) asparagine glycosylation occurs at N87. The region spanning 252–298 (NPLHCNCELLWLRRLTREDDLETCATPEHLTDRYFWSIPEEEFLCEP) is the LRRCT domain. An Ig-like domain is found at 299 to 386 (PLITRQAGGR…GEATAPVEVC (88 aa)). A disulfide bond links C321 and C370. N343 is a glycosylation site (N-linked (GlcNAc...) asparagine). The disordered stretch occupies residues 397-422 (PAAPPPLTEPGSSDIATPGRPGANDS). Positions 424-520 (TERRLVAAEL…GCVQFTTAGD (97 aa)) constitute a Fibronectin type-III domain. Residues 537 to 557 (IIAIGGVIVASVLVFIVLLMI) traverse the membrane as a helical segment. Over 558–766 (RYKVYGDGDS…STEWMLESTV (209 aa)) the chain is Cytoplasmic. Disordered regions lie at residues 568–601 (RRIK…PPAP) and 646–742 (CLLP…GEDG). S713 bears the Phosphoserine mark. Residues 714 to 727 (YPRRARRTKRHRST) are compositionally biased toward basic residues.

The protein belongs to the LRFN family. In terms of assembly, forms heteromeric complexes with LRFN2, LRFN4 and LRFN5; binding to LRFN2 and LRFN5 may be weaker than that to LRFN4. Also interacts with LRFN3. Forms homomeric complexes, but not across cell junctions. Interacts with DLG1, DLG2 and DLG4, but not with MAGI2, not CASK. Interacts with DLG3. Interacts with 2 AMPA receptor subunits GRIA1 and GRIA2 and NMDA receptor subunit GRIN1. Post-translationally, glycosylated. Mainly expressed in brain (at protein level) and testis. In brain, found in cerebral cortex (including pyramidal neurons), hippocampus (including CA3 and CA1 neurons), dentate gyrus, cerebellum (including Purkinje neurons) (at protein level) (at protein level). Also expressed in the olfactory bulb.

It is found in the membrane. The protein resides in the synapse. The protein localises to the postsynaptic density membrane. Promotes neurite outgrowth in hippocampal neurons. Involved in the regulation of the differentiation and maintenance of excitatory synapses. Induces the clustering of excitatory postsynaptic proteins, including DLG4, DLGAP1, GRIA1 and GRIN1. The polypeptide is Leucine-rich repeat and fibronectin type III domain-containing protein 1 (Lrfn1) (Rattus norvegicus (Rat)).